A 361-amino-acid chain; its full sequence is tRNA-specific 2-thiouridylase MnmA (361 aa).

ATP-binding positions include 8–15 (AMSGGVDS) and methionine 34. Cysteine 104 acts as the Nucleophile in catalysis. A disulfide bond links cysteine 104 and cysteine 202. An ATP-binding site is contributed by glycine 128. Residues 152-154 (KDQ) form an interaction with tRNA region. Cysteine 202 serves as the catalytic Cysteine persulfide intermediate. The interval 307 to 308 (RY) is interaction with tRNA.

Belongs to the MnmA/TRMU family.

It is found in the cytoplasm. The catalysed reaction is S-sulfanyl-L-cysteinyl-[protein] + uridine(34) in tRNA + AH2 + ATP = 2-thiouridine(34) in tRNA + L-cysteinyl-[protein] + A + AMP + diphosphate + H(+). Catalyzes the 2-thiolation of uridine at the wobble position (U34) of tRNA, leading to the formation of s(2)U34. In Caldicellulosiruptor saccharolyticus (strain ATCC 43494 / DSM 8903 / Tp8T 6331), this protein is tRNA-specific 2-thiouridylase MnmA.